A 794-amino-acid chain; its full sequence is MMAKAKALIPDNGRAGADEGNRQAWIGQEVLRREDRRLLTGTATFAGDLGVPGQLHMRIVRSTQAHARIVSIDATEAEKTPGVRMVITSEHTRHLGSVLLEELGYHEIYENIEDFSHPVLAVDKVLYVGQPVVAVLAVDPYLAEDAAELVSIEYEPLPVLLDPEEALTGKVELFPGRGNEGARIKKAYGDIDRAFAEAEHVIRHKYVTNRHSGVPMEPRAVVVQPDPARDTLFIWGTVHVHDNRRIIAKMLNLPEVNVRMKHVEIGGSFGVKGGVFPENVVAAWAARTLGVPIKWTEDRVEHMTSTSHAREMVHKLELALDAEGRILGMKDEIFHNHGAYFRQAEPLVSDITAGIVFGPYRVPAYDATLHAVFTNKTPVGAYRAPGRYESTFARERIFDLACAEIGLSKTEFRRRNLLTAEDLPWTPGLDIVHEPYHFDSGDVVKHFNEALEAANFSEWLEESKRLRADGRKVGVGLGVLMDKAGLGLFETGGVEVSRAGRVTVKTGGSSVGQGIETVLAQIVAEELQIAPENIDIVHSDTELIPDGVGSWSSRSTVLAGGAARKAALAVVEKARRLASEMLEADPDDLELTAGSFKVKGTDQQISLYEIAAARDPFTARADNDEPGLAADAVYMNNAMNYPYGVTLVQIELDPDTGGHRILRFSTSTEAGRVINPLTTRGQIIGAAVQGIGGALYEEFLYEEDGQPITTSFMDYLLPSAQEMPNVDCFVTEDAKSPDNPFGAKGLGEIGIIAAGAAIASAIDDAIADGVHTDRLPVTPEQIFSRCQGLNKAER.

As to quaternary structure, heterohexamer of 2 alpha (kdhA), 2 beta (kdhB) and 2 gamma (kdhC) subunit. Dimer of heterotrimers. Mo-molybdopterin cytosine dinucleotide is required as a cofactor.

The enzyme catalyses 6-hydroxypseudooxynicotine + A + H2O = 2,6-dihydroxypseudooxynicotine + AH2. Its pathway is alkaloid degradation; nicotine degradation. Molybdo-flavoprotein enzyme complex involved in nicotine degradation. The subunit gamma (large subunit) contains the substrate-binding sites, the subunit alpha (medium subunit) binds FAD and the subunit beta (small subunit) has a 2Fe-2S ferredoxin-type domain which binds 2 2Fe-2S clusters. The protein is 6-hydroxypseudooxynicotine dehydrogenase complex subunit gamma (kdhC) of Paenarthrobacter nicotinovorans (Arthrobacter nicotinovorans).